A 241-amino-acid polypeptide reads, in one-letter code: Probable transcriptional regulatory protein PSHAb0060 (241 aa).

This sequence belongs to the TACO1 family.

The protein resides in the cytoplasm. This Pseudoalteromonas translucida (strain TAC 125) protein is Probable transcriptional regulatory protein PSHAb0060.